The primary structure comprises 193 residues: Putative manganese efflux pump MntP (193 aa).

A run of 6 helical transmembrane segments spans residues 3 to 23 (MYAT…ASIC), 41 to 61 (LIFG…GLYA), 65 to 85 (IIEW…CRMI), 106 to 126 (IVLI…GIGL), 133 to 153 (IVHT…LGML), and 169 to 189 (IGGL…LELF).

It belongs to the MntP (TC 9.B.29) family.

The protein localises to the cell inner membrane. In terms of biological role, probably functions as a manganese efflux pump. This is Putative manganese efflux pump MntP from Photorhabdus laumondii subsp. laumondii (strain DSM 15139 / CIP 105565 / TT01) (Photorhabdus luminescens subsp. laumondii).